The chain runs to 480 residues: UDP-N-acetylmuramoyl-L-alanyl-D-glutamate--2,6-diaminopimelate ligase (480 aa).

Serine 21 is a UDP-N-acetyl-alpha-D-muramoyl-L-alanyl-D-glutamate binding site. An ATP-binding site is contributed by 98 to 104; that stretch reads GTNGKSS. Residues 144–145, serine 171, glutamine 177, and arginine 179 contribute to the UDP-N-acetyl-alpha-D-muramoyl-L-alanyl-D-glutamate site; that span reads TT. At lysine 211 the chain carries N6-carboxylysine. Meso-2,6-diaminopimelate is bound by residues arginine 372, 396 to 399, glycine 446, and glutamate 450; that span reads DNPR. The Meso-diaminopimelate recognition motif motif lies at 396-399; sequence DNPR.

It belongs to the MurCDEF family. MurE subfamily. It depends on Mg(2+) as a cofactor. In terms of processing, carboxylation is probably crucial for Mg(2+) binding and, consequently, for the gamma-phosphate positioning of ATP.

Its subcellular location is the cytoplasm. The catalysed reaction is UDP-N-acetyl-alpha-D-muramoyl-L-alanyl-D-glutamate + meso-2,6-diaminopimelate + ATP = UDP-N-acetyl-alpha-D-muramoyl-L-alanyl-gamma-D-glutamyl-meso-2,6-diaminopimelate + ADP + phosphate + H(+). It participates in cell wall biogenesis; peptidoglycan biosynthesis. Catalyzes the addition of meso-diaminopimelic acid to the nucleotide precursor UDP-N-acetylmuramoyl-L-alanyl-D-glutamate (UMAG) in the biosynthesis of bacterial cell-wall peptidoglycan. The chain is UDP-N-acetylmuramoyl-L-alanyl-D-glutamate--2,6-diaminopimelate ligase from Rickettsia prowazekii (strain Madrid E).